The primary structure comprises 1169 residues: ATP-dependent helicase/deoxyribonuclease subunit B (1169 aa).

Positions 1–285 constitute a UvrD-like helicase ATP-binding domain; the sequence is MEIQFLAGRS…TIFERNHRHL (285 aa). ATP is bound at residue 8–15; sequence GRSGSGKT. The region spanning 280–586 is the UvrD-like helicase C-terminal domain; sequence RNHRHLYTPD…KFALIPPSLD (307 aa). The [4Fe-4S] cluster site is built by C801, C1121, C1124, and C1130.

It belongs to the helicase family. AddB/RexB type 1 subfamily. In terms of assembly, heterodimer of AddA and AddB. The cofactor is Mg(2+). Requires [4Fe-4S] cluster as cofactor.

Its function is as follows. The heterodimer acts as both an ATP-dependent DNA helicase and an ATP-dependent, dual-direction single-stranded exonuclease. Recognizes the chi site generating a DNA molecule suitable for the initiation of homologous recombination. The AddB subunit has 5' -&gt; 3' nuclease activity but not helicase activity. The protein is ATP-dependent helicase/deoxyribonuclease subunit B of Bacillus pumilus (strain SAFR-032).